A 513-amino-acid chain; its full sequence is Probable DNA ligase (513 aa).

Glu-213 serves as a coordination point for ATP. Lys-215 (N6-AMP-lysine intermediate) is an active-site residue. ATP contacts are provided by Arg-220, Arg-235, Glu-264, Phe-304, Arg-376, and Lys-382.

It belongs to the ATP-dependent DNA ligase family. Mg(2+) serves as cofactor.

The enzyme catalyses ATP + (deoxyribonucleotide)n-3'-hydroxyl + 5'-phospho-(deoxyribonucleotide)m = (deoxyribonucleotide)n+m + AMP + diphosphate.. In terms of biological role, DNA ligase that seals nicks in double-stranded DNA during DNA replication, DNA recombination and DNA repair. This is Probable DNA ligase from Anaeromyxobacter dehalogenans (strain 2CP-1 / ATCC BAA-258).